A 236-amino-acid chain; its full sequence is SPbeta prophage-derived uncharacterized lipoprotein YokB (236 aa).

The N-terminal stretch at 1 to 19 (MNIRFSMLVCVSFIFFTGG) is a signal peptide. A lipid anchor (N-palmitoyl cysteine) is attached at cysteine 20. Cysteine 20 is lipidated: S-diacylglycerol cysteine. 2 disordered regions span residues 23-59 (SSANSNDGSKNKNESKEESSEEGVKENDNKLADTPNM) and 204-236 (VKKVSPEEEKREEKKREETMKSIYGEEHIKDNK). The segment covering 31 to 53 (SKNKNESKEESSEEGVKENDNKL) has biased composition (basic and acidic residues).

It is found in the cell membrane. This chain is SPbeta prophage-derived uncharacterized lipoprotein YokB (yokB), found in Bacillus subtilis (strain 168).